The chain runs to 215 residues: MKDTKAFNEQRAEIYWWLSSLFAKELTQEELDHYHSVEIRSFLTGLGENETLKPAIDSLVDALNRLQTREDAQLELSADFCDLFLKTDKHGALPYASMYIGQTGLLNDKPAKDMEEIMAKHNLVVNQDLKEPADHIAIELDFLGNLIIRSNETELEEELEKSFAVQQQFIEQQLLTWVPKFNVKCHDIDTFGFYASVSSLLLAFCKLDTQYLAGE.

Belongs to the TorD/DmsD family. TorD subfamily.

It is found in the cytoplasm. Its function is as follows. Involved in the biogenesis of TorA. Acts on TorA before the insertion of the molybdenum cofactor and, as a result, probably favors a conformation of the apoenzyme that is competent for acquiring the cofactor. This Vibrio atlanticus (strain LGP32) (Vibrio splendidus (strain Mel32)) protein is Chaperone protein TorD.